Reading from the N-terminus, the 83-residue chain is Mitochondrial import inner membrane translocase subunit Tim8 (83 aa).

A Twin CX3C motif motif is present at residues 35-60; the sequence is CWDVCFSDYRPPSKMDGKTQTCIQNC. 2 cysteine pairs are disulfide-bonded: C35–C60 and C39–C56.

This sequence belongs to the small Tim family. Heterohexamer; composed of 3 copies of ddp-1/tim-8 and 3 copies of tin-13/tim-13, named soluble 70 kDa complex. Associates with the TIM22 complex, whose core is composed of tim-22.

Its subcellular location is the mitochondrion inner membrane. Mitochondrial intermembrane chaperone that participates in the import and insertion of some multi-pass transmembrane proteins into the mitochondrial inner membrane. Also required for the transfer of beta-barrel precursors from the TOM complex to the sorting and assembly machinery (SAM complex) of the outer membrane. Acts as a chaperone-like protein that protects the hydrophobic precursors from aggregation and guide them through the mitochondrial intermembrane space. The ddp-1/tim-8-tim-13 complex mediates the import of some proteins while the predominant tim-9/tin-9.1-tim-10/tin-10 70 kDa complex mediates the import of much more proteins. This is Mitochondrial import inner membrane translocase subunit Tim8 from Caenorhabditis briggsae.